The chain runs to 525 residues: CTP synthase (525 aa).

Residues 1-269 (MKYIIVTGGV…ADAITTHLHL (269 aa)) are amidoligase domain. Residue Ser12 coordinates CTP. A UTP-binding site is contributed by Ser12. ATP is bound by residues 13–18 (GLGKGI) and Asp70. Mg(2+) is bound by residues Asp70 and Glu144. CTP-binding positions include 151–153 (DIE), 190–195 (KTKPTQ), and Lys226. Residues 190–195 (KTKPTQ) and Lys226 each bind UTP. Residues 292-524 (VAIVSKYGIE…VSACRKNKKT (233 aa)) form the Glutamine amidotransferase type-1 domain. Gly348 provides a ligand contact to L-glutamine. The Nucleophile; for glutamine hydrolysis role is filled by Cys375. Residues 376-379 (LGFQ), Glu399, and Arg454 contribute to the L-glutamine site. Residues His497 and Glu499 contribute to the active site.

Belongs to the CTP synthase family. In terms of assembly, homotetramer.

The catalysed reaction is UTP + L-glutamine + ATP + H2O = CTP + L-glutamate + ADP + phosphate + 2 H(+). The enzyme catalyses L-glutamine + H2O = L-glutamate + NH4(+). It catalyses the reaction UTP + NH4(+) + ATP = CTP + ADP + phosphate + 2 H(+). It participates in pyrimidine metabolism; CTP biosynthesis via de novo pathway; CTP from UDP: step 2/2. Allosterically activated by GTP, when glutamine is the substrate; GTP has no effect on the reaction when ammonia is the substrate. The allosteric effector GTP functions by stabilizing the protein conformation that binds the tetrahedral intermediate(s) formed during glutamine hydrolysis. Inhibited by the product CTP, via allosteric rather than competitive inhibition. Catalyzes the ATP-dependent amination of UTP to CTP with either L-glutamine or ammonia as the source of nitrogen. Regulates intracellular CTP levels through interactions with the four ribonucleotide triphosphates. In Methanosphaerula palustris (strain ATCC BAA-1556 / DSM 19958 / E1-9c), this protein is CTP synthase.